The primary structure comprises 145 residues: Large ribosomal subunit protein uL11 (145 aa).

Belongs to the universal ribosomal protein uL11 family. As to quaternary structure, part of the ribosomal stalk of the 50S ribosomal subunit. Interacts with L10 and the large rRNA to form the base of the stalk. L10 forms an elongated spine to which L12 dimers bind in a sequential fashion forming a multimeric L10(L12)X complex. Post-translationally, one or more lysine residues are methylated.

Forms part of the ribosomal stalk which helps the ribosome interact with GTP-bound translation factors. The protein is Large ribosomal subunit protein uL11 of Rickettsia massiliae (strain Mtu5).